A 902-amino-acid chain; its full sequence is Protein translocase subunit SecA (902 aa).

ATP is bound by residues glutamine 89, 107–111 (GEGKT), and aspartate 502. 4 residues coordinate Zn(2+): cysteine 884, cysteine 886, cysteine 895, and histidine 896.

It belongs to the SecA family. Monomer and homodimer. Part of the essential Sec protein translocation apparatus which comprises SecA, SecYEG and auxiliary proteins SecDF-YajC and YidC. The cofactor is Zn(2+).

Its subcellular location is the cell inner membrane. The protein localises to the cytoplasm. The catalysed reaction is ATP + H2O + cellular proteinSide 1 = ADP + phosphate + cellular proteinSide 2.. In terms of biological role, part of the Sec protein translocase complex. Interacts with the SecYEG preprotein conducting channel. Has a central role in coupling the hydrolysis of ATP to the transfer of proteins into and across the cell membrane, serving both as a receptor for the preprotein-SecB complex and as an ATP-driven molecular motor driving the stepwise translocation of polypeptide chains across the membrane. In Agrobacterium fabrum (strain C58 / ATCC 33970) (Agrobacterium tumefaciens (strain C58)), this protein is Protein translocase subunit SecA.